Here is an 82-residue protein sequence, read N- to C-terminus: Small ribosomal subunit protein bS16 (82 aa).

The protein belongs to the bacterial ribosomal protein bS16 family.

In Aeromonas hydrophila subsp. hydrophila (strain ATCC 7966 / DSM 30187 / BCRC 13018 / CCUG 14551 / JCM 1027 / KCTC 2358 / NCIMB 9240 / NCTC 8049), this protein is Small ribosomal subunit protein bS16.